We begin with the raw amino-acid sequence, 335 residues long: Mitochondrial fission regulator 1 (335 aa).

Residues 1–48 constitute a mitochondrion transit peptide; sequence MIRWFKCFMRMIFEQVGLNMESVLWSSKPYGSSRSIVRKIGTNLSLIQ. The stretch at 134–170 forms a coiled coil; that stretch reads RSTVIANEEAMQKISALENELATLRAQIAKIVILQEQ. Positions 182 to 309 are necessary and sufficient to promote mitochondrial fission; the sequence is ASAAVPCVPP…DKVIPKSETN (128 aa). A disordered region spans residues 219 to 240; that stretch reads RKNRKTNSGPIPTENGPKKPEI.

The protein belongs to the MTFR1 family. As to expression, widely expressed in embryonic tissues with higher expression in cartilage and hypertrophic chondrocytes. Specifically expressed in hypertrophic chondrocytes (at protein level).

It localises to the mitochondrion. Functionally, may play a role in mitochondrial aerobic respiration. May also regulate mitochondrial organization and fission. The polypeptide is Mitochondrial fission regulator 1 (MTFR1) (Gallus gallus (Chicken)).